The sequence spans 402 residues: DNA polymerase IV (402 aa).

The region spanning 5–187 is the UmuC domain; sequence ILLADMNSFY…LPVRELFGVG (183 aa). Residues D9 and D105 each coordinate Mg(2+). E106 is a catalytic residue.

It belongs to the DNA polymerase type-Y family. As to quaternary structure, monomer. Mg(2+) is required as a cofactor.

Its subcellular location is the cytoplasm. It carries out the reaction DNA(n) + a 2'-deoxyribonucleoside 5'-triphosphate = DNA(n+1) + diphosphate. Functionally, poorly processive, error-prone DNA polymerase involved in untargeted mutagenesis. Copies undamaged DNA at stalled replication forks, which arise in vivo from mismatched or misaligned primer ends. These misaligned primers can be extended by PolIV. Exhibits no 3'-5' exonuclease (proofreading) activity. May be involved in translesional synthesis, in conjunction with the beta clamp from PolIII. In Pelotomaculum thermopropionicum (strain DSM 13744 / JCM 10971 / SI), this protein is DNA polymerase IV.